The following is a 371-amino-acid chain: tRNA-specific 2-thiouridylase MnmA (371 aa).

Residues 14–21 (GMSGGVDS) and methionine 40 contribute to the ATP site. The interaction with target base in tRNA stretch occupies residues 100–102 (NPD). The Nucleophile role is filled by cysteine 105. An intrachain disulfide couples cysteine 105 to cysteine 205. An ATP-binding site is contributed by glycine 129. The tract at residues 155-157 (KDQ) is interaction with tRNA. The Cysteine persulfide intermediate role is filled by cysteine 205. Positions 321 to 322 (RY) are interaction with tRNA.

Belongs to the MnmA/TRMU family.

The protein resides in the cytoplasm. It carries out the reaction S-sulfanyl-L-cysteinyl-[protein] + uridine(34) in tRNA + AH2 + ATP = 2-thiouridine(34) in tRNA + L-cysteinyl-[protein] + A + AMP + diphosphate + H(+). Its function is as follows. Catalyzes the 2-thiolation of uridine at the wobble position (U34) of tRNA, leading to the formation of s(2)U34. This chain is tRNA-specific 2-thiouridylase MnmA, found in Bordetella pertussis (strain Tohama I / ATCC BAA-589 / NCTC 13251).